We begin with the raw amino-acid sequence, 113 residues long: MATNITMFLIVITLTSVAAQTFQYSRGWTNGKRDGHKTEDIRDLTNNLERILSPCQMNKLKYVLEGKPLNERLLGPCDTSKTRSTTNPSDTNTSAVKTPCSTHFNKHCYSFSY.

The first 19 residues, 1 to 19, serve as a signal peptide directing secretion; sequence MATNITMFLIVITLTSVAA. At Gln-20 the chain carries Pyrrolidone carboxylic acid. Asn-30 bears the Asparagine amide mark. Positions 74–96 are disordered; that stretch reads LGPCDTSKTRSTTNPSDTNTSAV. The segment covering 82-96 has biased composition (polar residues); sequence TRSTTNPSDTNTSAV.

The protein belongs to the corazonin family. As to expression, four pairs of lateral neurosecretory cells in the brains of late instar larvae, pupae and adults.

Its subcellular location is the secreted. Functionally, cardioactive peptide. Corazonin is probably involved in the physiological regulation of the heart beat. The chain is Pro-corazonin from Galleria mellonella (Greater wax moth).